The primary structure comprises 73 residues: Protein SlyX homolog (73 aa).

This sequence belongs to the SlyX family.

The polypeptide is Protein SlyX homolog (Haemophilus influenzae (strain PittEE)).